The chain runs to 557 residues: Dihydroxy-acid dehydratase (557 aa).

[2Fe-2S] cluster is bound at residue Cys50. Asp82 lines the Mg(2+) pocket. Position 123 (Cys123) interacts with [2Fe-2S] cluster. Asp124 and Lys125 together coordinate Mg(2+). Residue Lys125 is modified to N6-carboxylysine. Cys195 contributes to the [2Fe-2S] cluster binding site. Residue Glu447 participates in Mg(2+) binding. The active-site Proton acceptor is the Ser473.

The protein belongs to the IlvD/Edd family. In terms of assembly, homodimer. It depends on [2Fe-2S] cluster as a cofactor. The cofactor is Mg(2+).

The enzyme catalyses (2R)-2,3-dihydroxy-3-methylbutanoate = 3-methyl-2-oxobutanoate + H2O. The catalysed reaction is (2R,3R)-2,3-dihydroxy-3-methylpentanoate = (S)-3-methyl-2-oxopentanoate + H2O. Its pathway is amino-acid biosynthesis; L-isoleucine biosynthesis; L-isoleucine from 2-oxobutanoate: step 3/4. It functions in the pathway amino-acid biosynthesis; L-valine biosynthesis; L-valine from pyruvate: step 3/4. Functionally, functions in the biosynthesis of branched-chain amino acids. Catalyzes the dehydration of (2R,3R)-2,3-dihydroxy-3-methylpentanoate (2,3-dihydroxy-3-methylvalerate) into 2-oxo-3-methylpentanoate (2-oxo-3-methylvalerate) and of (2R)-2,3-dihydroxy-3-methylbutanoate (2,3-dihydroxyisovalerate) into 2-oxo-3-methylbutanoate (2-oxoisovalerate), the penultimate precursor to L-isoleucine and L-valine, respectively. In Burkholderia mallei (strain NCTC 10247), this protein is Dihydroxy-acid dehydratase.